We begin with the raw amino-acid sequence, 286 residues long: Tryptophan 2,3-dioxygenase (286 aa).

Substrate contacts are provided by residues 55–59 (FIIIH), Y117, and R121. H244 contributes to the heme binding site. T258 lines the substrate pocket.

It belongs to the tryptophan 2,3-dioxygenase family. In terms of assembly, homotetramer. Heme serves as cofactor.

The catalysed reaction is L-tryptophan + O2 = N-formyl-L-kynurenine. It participates in amino-acid degradation; L-tryptophan degradation via kynurenine pathway; L-kynurenine from L-tryptophan: step 1/2. Heme-dependent dioxygenase that catalyzes the oxidative cleavage of the L-tryptophan (L-Trp) pyrrole ring and converts L-tryptophan to N-formyl-L-kynurenine. Catalyzes the oxidative cleavage of the indole moiety. This chain is Tryptophan 2,3-dioxygenase, found in Shewanella woodyi (strain ATCC 51908 / MS32).